The following is an 815-amino-acid chain: uncharacterized protein (815 aa).

The signal sequence occupies residues 1–25 (MVVMKKKRILIVSAIVLLFLTVASA). A run of 6 helical transmembrane segments spans residues 127–147 (FGEA…CVRG), 157–177 (ILFI…GYYM), 311–331 (SFIA…LAFF), 333–353 (FLLQ…FILA), 372–392 (VYLL…TCFI), and 401–421 (GFGM…IGFH). The interval 483–815 (KDGSNADGVT…DRLRRDERTR (333 aa)) is disordered. The segment covering 513–543 (HAISRTPQKETANGIANHNSRSLKRNPQTLS) has biased composition (polar residues). Composition is skewed to basic and acidic residues over residues 544–563 (KEQE…ENKQ) and 599–614 (QDKK…KEYV). Residues 619 to 630 (KQPNNQQQTDDA) are compositionally biased toward polar residues. The segment covering 648–658 (ENEKDTERTDQ) has biased composition (basic and acidic residues). A compositionally biased stretch (polar residues) spans 665–678 (EQNQNLETDQQQDF). Residues 696–705 (KTAEIKRSDQ) show a composition bias toward basic and acidic residues. Positions 720–732 (SPQSTKVENQPIA) are enriched in polar residues. The span at 734 to 757 (NERKIRPSEPAKVHSDGIRVDEKQ) shows a compositional bias: basic and acidic residues. Over residues 773 to 793 (PSSQTIKRTEQSVNSFDQVSL) the composition is skewed to polar residues. The span at 796–815 (IARRSSSKVEDRLRRDERTR) shows a compositional bias: basic and acidic residues.

The protein localises to the cell membrane. This is an uncharacterized protein from Bacillus subtilis (strain 168).